Reading from the N-terminus, the 261-residue chain is Indole-3-glycerol phosphate synthase (261 aa).

This sequence belongs to the TrpC family.

It carries out the reaction 1-(2-carboxyphenylamino)-1-deoxy-D-ribulose 5-phosphate + H(+) = (1S,2R)-1-C-(indol-3-yl)glycerol 3-phosphate + CO2 + H2O. It participates in amino-acid biosynthesis; L-tryptophan biosynthesis; L-tryptophan from chorismate: step 4/5. The polypeptide is Indole-3-glycerol phosphate synthase (Paraburkholderia xenovorans (strain LB400)).